The primary structure comprises 402 residues: NADH-quinone oxidoreductase subunit D (402 aa).

The protein belongs to the complex I 49 kDa subunit family. NDH-1 is composed of 14 different subunits. Subunits NuoB, C, D, E, F, and G constitute the peripheral sector of the complex.

It is found in the cell inner membrane. It carries out the reaction a quinone + NADH + 5 H(+)(in) = a quinol + NAD(+) + 4 H(+)(out). Functionally, NDH-1 shuttles electrons from NADH, via FMN and iron-sulfur (Fe-S) centers, to quinones in the respiratory chain. The immediate electron acceptor for the enzyme in this species is believed to be ubiquinone. Couples the redox reaction to proton translocation (for every two electrons transferred, four hydrogen ions are translocated across the cytoplasmic membrane), and thus conserves the redox energy in a proton gradient. The chain is NADH-quinone oxidoreductase subunit D from Nitrobacter winogradskyi (strain ATCC 25391 / DSM 10237 / CIP 104748 / NCIMB 11846 / Nb-255).